A 950-amino-acid chain; its full sequence is UvrABC system protein A (950 aa).

Position 42-49 (42-49 (GLSGSGKS)) interacts with ATP. The C4-type zinc finger occupies 262–289 (CPVCSYSLPELEPRLFSFNNPMGSCPTC). 2 ABC transporter domains span residues 319–596 (WDKR…EKSV) and 616–945 (VNPG…KYLK). 649 to 656 (GVSGSGKS) lines the ATP pocket. The C4-type zinc finger occupies 748–774 (CEACQGDGVIKVEMHFLPDVYVPCEVC).

The protein belongs to the ABC transporter superfamily. UvrA family. As to quaternary structure, forms a heterotetramer with UvrB during the search for lesions.

Its subcellular location is the cytoplasm. Functionally, the UvrABC repair system catalyzes the recognition and processing of DNA lesions. UvrA is an ATPase and a DNA-binding protein. A damage recognition complex composed of 2 UvrA and 2 UvrB subunits scans DNA for abnormalities. When the presence of a lesion has been verified by UvrB, the UvrA molecules dissociate. The chain is UvrABC system protein A from Neisseria gonorrhoeae.